Consider the following 276-residue polypeptide: Large ribosomal subunit protein uL2 (276 aa).

Disordered stretches follow at residues 37 to 59 (QFQK…GGHK) and 224 to 276 (VAMN…RHKR). Residues 50 to 59 (TTRHKGGGHK) show a composition bias toward basic residues.

The protein belongs to the universal ribosomal protein uL2 family. As to quaternary structure, part of the 50S ribosomal subunit. Forms a bridge to the 30S subunit in the 70S ribosome.

Functionally, one of the primary rRNA binding proteins. Required for association of the 30S and 50S subunits to form the 70S ribosome, for tRNA binding and peptide bond formation. It has been suggested to have peptidyltransferase activity; this is somewhat controversial. Makes several contacts with the 16S rRNA in the 70S ribosome. In Ralstonia nicotianae (strain ATCC BAA-1114 / GMI1000) (Ralstonia solanacearum), this protein is Large ribosomal subunit protein uL2.